A 632-amino-acid polypeptide reads, in one-letter code: MTQQTMSFQAEVKQLLHLMIHSLYSNKEIFLRELVSNASDAADKLRFEALENNALYESDPNLRIRLSFDKAARTITIDDNGIGMSRDEAIANLGTIARSGTKEFFSKLSGDQQKDAALIGQFGVGFYSGFIVADRITVETRRAGLPASEGVRWESAGEGDFQVDTIERAARGTTITLHLREGEDELLSSYRLKSIVQKYSDHVALPILMKKEEWDQEKGEMVEKDEDETINQASALWTRAKSEVTDEQYKQFYQHVAHDHQDPLAWTHNRVEGRSEYTQLLFVPSHAPFDLWNRDYRGGLKLYVKRVFIMDDAEQLLPQYLRFIKGVVDSSDLPLNVSREILQESRDVKAIREGVTKRALSMLEELANAEDDAGKEKYKTFWSAFGQVLKEGVGEDHANRERVAKLLRFASTHGDTDAQDVALADYVARMKPEQTKLYYVTADTWQAAKNSPHLEVFRKKGVEVLLLTDRVDEWMLSFLHEFDGKPLASVARGDLDLGALNDDEKKAQEETGEAMKPVVDKMKETLGEKVKDVRVTFRLTDSPSCLVADDNDMSGYLQRMLKAAGQSAPSFQPILEINPEHPLVKALKADGADFGDWCHLLFDQALLAEGGALEDPASFVKRTNALLLSRAA.

Residues 1-339 (MTQQTMSFQA…SSDLPLNVSR (339 aa)) are a; substrate-binding. Residues 340–559 (EILQESRDVK…DNDMSGYLQR (220 aa)) form a b region. The c stretch occupies residues 560 to 632 (MLKAAGQSAP…TNALLLSRAA (73 aa)).

It belongs to the heat shock protein 90 family. In terms of assembly, homodimer.

The protein resides in the cytoplasm. Functionally, molecular chaperone. Has ATPase activity. This is Chaperone protein HtpG from Burkholderia pseudomallei (strain 1106a).